The chain runs to 810 residues: Actin-regulating kinase PRK1 (810 aa).

The 277-residue stretch at 22–298 (AKIIKYLTSG…CQVLEEVSRL (277 aa)) folds into the Protein kinase domain. ATP is bound by residues 28 to 36 (LTSGGFAQV) and Lys56. Residue Asp158 is the Proton acceptor of the active site. A phosphoserine mark is found at Ser402, Ser428, and Ser484. Disordered stretches follow at residues 552–668 (FTGN…NVNI) and 733–761 (GVLDIKTKSNGKDKSRPPRPPPKPLHLRT). Thr553 carries the phosphothreonine modification. Polar residues predominate over residues 553–566 (TGNSVNNSRSASFD). Phosphoserine is present on Ser556. Positions 567-588 (NNNVNGNGNNTNRRLVSSSTSS) are enriched in low complexity. Basic and acidic residues-rich tracts occupy residues 594-612 (SDTKRKEESDKNQRLEKRR) and 622-639 (FDQHERNNSRTGSRDYYR). The segment covering 645–658 (KKTQASAKTTSKPT) has biased composition (low complexity). Residues 733–748 (GVLDIKTKSNGKDKSR) show a composition bias toward basic and acidic residues. Residues 743–756 (GKDKSRPPRPPPKP) are interaction with SH3 domain of ABP1.

It belongs to the protein kinase superfamily. Ser/Thr protein kinase family. Interacts with ABP1, which is required for proper actin patch localization.

It is found in the cytoplasm. Its subcellular location is the cytoskeleton. The protein localises to the actin patch. It carries out the reaction L-seryl-[protein] + ATP = O-phospho-L-seryl-[protein] + ADP + H(+). It catalyses the reaction L-threonyl-[protein] + ATP = O-phospho-L-threonyl-[protein] + ADP + H(+). Functionally, protein kinase involved in the regulation of actin cytoskeleton organization and endocytosis. Phosphorylates PAN1 which disrupts the interaction between PAN1 and END3, and between PAN1 and SLA1. Phosphorylates SCD5. Preferentially, phosphorylates substrates on threonine residues in a [L/I/V/M]-x-x-[Q/N/T/S]-x-T-G motif. The polypeptide is Actin-regulating kinase PRK1 (PRK1) (Saccharomyces cerevisiae (strain ATCC 204508 / S288c) (Baker's yeast)).